Here is a 270-residue protein sequence, read N- to C-terminus: L-fucose dehydrogenase (270 aa).

Arg-19, Ile-21, Asp-40, Lys-41, Asp-62, Val-63, Asn-89, Tyr-154, Lys-158, Ile-187, Thr-189, and Leu-191 together coordinate NAD(+).

It belongs to the short-chain dehydrogenases/reductases (SDR) family.

It carries out the reaction L-fucose + NAD(+) = L-fucono-1,5-lactone + NADH + H(+). The enzyme catalyses D-arabinose + NAD(+) = D-arabinono-1,5-lactone + NADH + H(+). It catalyses the reaction L-galactose + NAD(+) = L-galactono-1,5-lactone + NADH + H(+). Its function is as follows. Catalyzes the NAD(+)-dependent oxidation of L-fucose, yielding L-fucono-1,5-lactone, which rapidly converts spontaneously to L-fucone-1,4-lactone. Does not use NADPH. Displays low activity on L-fucose, D-arabinose and L-galactose compared with rabbit and human. This is consitent with the low L-fucose metabolism observed in this species. This is L-fucose dehydrogenase (Hsd17b14) from Rattus norvegicus (Rat).